A 124-amino-acid chain; its full sequence is Acidic phospholipase A2 BA2 (124 aa).

Cystine bridges form between Cys26-Cys116, Cys28-Cys44, Cys43-Cys95, Cys49-Cys124, Cys50-Cys88, Cys57-Cys81, and Cys75-Cys86. Residues Tyr27, Gly29, and Gly31 each contribute to the Ca(2+) site. The active site involves His47. A Ca(2+)-binding site is contributed by Asp48. Residue Asp89 is part of the active site.

This sequence belongs to the phospholipase A2 family. Group II subfamily. D49 sub-subfamily. It depends on Ca(2+) as a cofactor. In terms of tissue distribution, expressed by the venom gland.

It localises to the secreted. The enzyme catalyses a 1,2-diacyl-sn-glycero-3-phosphocholine + H2O = a 1-acyl-sn-glycero-3-phosphocholine + a fatty acid + H(+). In terms of biological role, PLA2 catalyzes the calcium-dependent hydrolysis of the 2-acyl groups in 3-sn-phosphoglycerides. This is Acidic phospholipase A2 BA2 from Gloydius halys (Chinese water mocassin).